The chain runs to 337 residues: MSGAPHIPVLLAEVRGVLRLGEGPGVVVDGTFGAGGYSRALLAADPDLRVIAIDRDPTAVAAGQELAAAAGGRLRLVQGRFGDLDAIVRREGVEAVDGVVLDIGVSSMQLDRAERGFSFRADGPLDMRMEGAGTSAADLVNGAPEAELADIIYHFGEERRSRAVARAILEARRRAPIATTGALAEIVAGVVRAEPGSGIHPATRTFQALRIAVNDELGELNRALHAAERILRPGGRLAVVTFHSLEDRIVKQFFSARSGRAVSASRHLPMAERPVPRSFTLVTKGPVGPSEAEAAANPRARSAKLRAGERTDAPAPEPLAALAALAALPPRERGGRR.

Residues 35-37, Asp54, Phe81, Asp102, and Gln109 contribute to the S-adenosyl-L-methionine site; that span reads GGY. The segment at 286–316 is disordered; it reads PVGPSEAEAAANPRARSAKLRAGERTDAPAP. Over residues 289 to 300 the composition is skewed to low complexity; sequence PSEAEAAANPRA.

It belongs to the methyltransferase superfamily. RsmH family.

The protein localises to the cytoplasm. It carries out the reaction cytidine(1402) in 16S rRNA + S-adenosyl-L-methionine = N(4)-methylcytidine(1402) in 16S rRNA + S-adenosyl-L-homocysteine + H(+). Its function is as follows. Specifically methylates the N4 position of cytidine in position 1402 (C1402) of 16S rRNA. The chain is Ribosomal RNA small subunit methyltransferase H from Methylobacterium sp. (strain 4-46).